Here is a 244-residue protein sequence, read N- to C-terminus: Signal recognition particle receptor subunit beta (244 aa).

A helical transmembrane segment spans residues 7-23 (IIACLLVIGTTIALIAV). GTP contacts are provided by residues 45–53 (GPQNSGKTS), 66–69 (TVVS), glycine 90, and 154–157 (NKSE).

It belongs to the SRP receptor beta subunit family. As to quaternary structure, heterodimer of an alpha and a beta chain.

It localises to the endoplasmic reticulum membrane. In terms of biological role, component of the signal recognition particle (SRP) complex receptor (SR). Ensures, in conjunction with the SRP complex, the correct targeting of the nascent secretory proteins to the endoplasmic reticulum membrane system. May mediate the membrane association of SR. The polypeptide is Signal recognition particle receptor subunit beta (SRP102) (Saccharomyces cerevisiae (strain ATCC 204508 / S288c) (Baker's yeast)).